Reading from the N-terminus, the 150-residue chain is 3-dehydroquinate dehydratase (150 aa).

Tyr26 (proton acceptor) is an active-site residue. Substrate-binding residues include Asn77, His83, and Asp90. Residue His103 is the Proton donor of the active site. Substrate is bound by residues 104 to 105 and Arg114; that span reads LS.

Belongs to the type-II 3-dehydroquinase family. In terms of assembly, homododecamer.

It carries out the reaction 3-dehydroquinate = 3-dehydroshikimate + H2O. Its pathway is metabolic intermediate biosynthesis; chorismate biosynthesis; chorismate from D-erythrose 4-phosphate and phosphoenolpyruvate: step 3/7. Functionally, catalyzes a trans-dehydration via an enolate intermediate. The sequence is that of 3-dehydroquinate dehydratase from Vibrio cholerae serotype O1 (strain ATCC 39541 / Classical Ogawa 395 / O395).